The chain runs to 71 residues: Protein KleB (71 aa).

The segment at residues 9-28 (VTTNCRRCGKSISTLSRSLI) is a DNA-binding region (H-T-H motif).

This chain is Protein KleB (kleB), found in Escherichia coli.